We begin with the raw amino-acid sequence, 589 residues long: Proline--tRNA ligase (589 aa).

Belongs to the class-II aminoacyl-tRNA synthetase family. ProS type 1 subfamily. Homodimer.

It is found in the cytoplasm. The catalysed reaction is tRNA(Pro) + L-proline + ATP = L-prolyl-tRNA(Pro) + AMP + diphosphate. Its function is as follows. Catalyzes the attachment of proline to tRNA(Pro) in a two-step reaction: proline is first activated by ATP to form Pro-AMP and then transferred to the acceptor end of tRNA(Pro). As ProRS can inadvertently accommodate and process non-cognate amino acids such as alanine and cysteine, to avoid such errors it has two additional distinct editing activities against alanine. One activity is designated as 'pretransfer' editing and involves the tRNA(Pro)-independent hydrolysis of activated Ala-AMP. The other activity is designated 'posttransfer' editing and involves deacylation of mischarged Ala-tRNA(Pro). The misacylated Cys-tRNA(Pro) is not edited by ProRS. The protein is Proline--tRNA ligase of Gloeobacter violaceus (strain ATCC 29082 / PCC 7421).